A 141-amino-acid polypeptide reads, in one-letter code: Hemoglobin subunit alpha-D (141 aa).

A Globin domain is found at 1–141 (MLSADDKKII…VAAVLAEKYR (141 aa)). Residues H58 and H87 each contribute to the heme b site.

Belongs to the globin family. Heterotetramer of two alpha-D chains and two beta chains. In terms of tissue distribution, red blood cells.

Involved in oxygen transport from the lung to the various peripheral tissues. This is Hemoglobin subunit alpha-D (HBAD) from Anser indicus (Bar-headed goose).